The chain runs to 157 residues: Transcription inhibitor protein Gfh1 (157 aa).

Residues 1–74 (MAREVKLTKA…LEDVLSRAVI (74 aa)) adopt a coiled-coil conformation.

It belongs to the GreA/GreB family. As to quaternary structure, interacts with RNAP.

Inhibits all catalytic activities of RNA polymerase (RNAP) by partially occluding its substrate-binding site and preventing NTP binding. This is Transcription inhibitor protein Gfh1 (gfh1) from Thermus aquaticus.